The following is a 124-amino-acid chain: Multifunctional methyltransferase subunit TRM112 homolog A (124 aa).

The 119-residue stretch at 2–120 (RLITHNMLSC…NKGIPNMLLH (119 aa)) folds into the TRM112 domain.

This sequence belongs to the TRM112 family. Interacts with TRM9.

Its function is as follows. Acts as an activator of both rRNA/tRNA and protein methyltransferases. Required for TRM9 tRNA methyltransferase activity. Involved in the regulation of cell division progression during organ growth. Required for the expression of cell cycle-related genes, and the G2-M phase progression during organogenesis. This chain is Multifunctional methyltransferase subunit TRM112 homolog A, found in Arabidopsis thaliana (Mouse-ear cress).